The primary structure comprises 256 residues: Pimeloyl-[acyl-carrier protein] methyl ester esterase (256 aa).

In terms of domain architecture, AB hydrolase-1 spans 15–242 (HLVLLHGWGL…AAHAPFISHP (228 aa)). Substrate contacts are provided by residues W22, 82–83 (SL), and 143–147 (FLALQ). S82 functions as the Nucleophile in the catalytic mechanism. Active-site residues include D207 and H235. H235 contacts substrate.

This sequence belongs to the AB hydrolase superfamily. Carboxylesterase BioH family. In terms of assembly, monomer.

The protein resides in the cytoplasm. It catalyses the reaction 6-carboxyhexanoyl-[ACP] methyl ester + H2O = 6-carboxyhexanoyl-[ACP] + methanol + H(+). The protein operates within cofactor biosynthesis; biotin biosynthesis. In terms of biological role, the physiological role of BioH is to remove the methyl group introduced by BioC when the pimeloyl moiety is complete. It allows to synthesize pimeloyl-ACP via the fatty acid synthetic pathway through the hydrolysis of the ester bonds of pimeloyl-ACP esters. The chain is Pimeloyl-[acyl-carrier protein] methyl ester esterase from Escherichia fergusonii (strain ATCC 35469 / DSM 13698 / CCUG 18766 / IAM 14443 / JCM 21226 / LMG 7866 / NBRC 102419 / NCTC 12128 / CDC 0568-73).